The sequence spans 183 residues: Dual-action ribosomal maturation protein DarP (183 aa).

This sequence belongs to the DarP family.

It is found in the cytoplasm. Functionally, member of a network of 50S ribosomal subunit biogenesis factors which assembles along the 30S-50S interface, preventing incorrect 23S rRNA structures from forming. Promotes peptidyl transferase center (PTC) maturation. The chain is Dual-action ribosomal maturation protein DarP from Escherichia coli O81 (strain ED1a).